A 362-amino-acid chain; its full sequence is Phosphoserine aminotransferase (362 aa).

L-glutamate-binding residues include Ser-9 and Arg-42. Pyridoxal 5'-phosphate is bound by residues 76–77, Trp-102, Thr-153, Asp-174, and Gln-197; that span reads AR. The residue at position 198 (Lys-198) is an N6-(pyridoxal phosphate)lysine. 239–240 contacts pyridoxal 5'-phosphate; sequence NT.

The protein belongs to the class-V pyridoxal-phosphate-dependent aminotransferase family. SerC subfamily. In terms of assembly, homodimer. Requires pyridoxal 5'-phosphate as cofactor.

The protein localises to the cytoplasm. It carries out the reaction O-phospho-L-serine + 2-oxoglutarate = 3-phosphooxypyruvate + L-glutamate. The catalysed reaction is 4-(phosphooxy)-L-threonine + 2-oxoglutarate = (R)-3-hydroxy-2-oxo-4-phosphooxybutanoate + L-glutamate. It participates in amino-acid biosynthesis; L-serine biosynthesis; L-serine from 3-phospho-D-glycerate: step 2/3. Its pathway is cofactor biosynthesis; pyridoxine 5'-phosphate biosynthesis; pyridoxine 5'-phosphate from D-erythrose 4-phosphate: step 3/5. In terms of biological role, catalyzes the reversible conversion of 3-phosphohydroxypyruvate to phosphoserine and of 3-hydroxy-2-oxo-4-phosphonooxybutanoate to phosphohydroxythreonine. The sequence is that of Phosphoserine aminotransferase from Photorhabdus laumondii subsp. laumondii (strain DSM 15139 / CIP 105565 / TT01) (Photorhabdus luminescens subsp. laumondii).